The primary structure comprises 134 residues: Small ribosomal subunit protein uS11 (134 aa).

The interval 115–134 is disordered; that stretch reads TPIPHNGTRPPKKVLKRDLK. Residues 124–134 are compositionally biased toward basic residues; it reads PPKKVLKRDLK.

Belongs to the universal ribosomal protein uS11 family. As to quaternary structure, part of the 30S ribosomal subunit. Interacts with proteins S7 and S18. Binds to IF-3.

Its function is as follows. Located on the platform of the 30S subunit, it bridges several disparate RNA helices of the 16S rRNA. Forms part of the Shine-Dalgarno cleft in the 70S ribosome. This is Small ribosomal subunit protein uS11 from Mycoplasma mobile (strain ATCC 43663 / 163K / NCTC 11711) (Mesomycoplasma mobile).